A 328-amino-acid polypeptide reads, in one-letter code: Ubiquitin-conjugating enzyme E2 Z (328 aa).

Residues glutamine 71–valine 225 enclose the UBC core domain. Cysteine 160 functions as the Glycyl thioester intermediate in the catalytic mechanism. The interval arginine 295–proline 328 is disordered. The segment covering aspartate 312 to proline 328 has biased composition (low complexity).

The protein belongs to the ubiquitin-conjugating enzyme family.

It is found in the cytoplasm. It localises to the nucleus. The catalysed reaction is S-ubiquitinyl-[E1 ubiquitin-activating enzyme]-L-cysteine + [E2 ubiquitin-conjugating enzyme]-L-cysteine = [E1 ubiquitin-activating enzyme]-L-cysteine + S-ubiquitinyl-[E2 ubiquitin-conjugating enzyme]-L-cysteine.. It functions in the pathway protein modification; protein ubiquitination. Functionally, catalyzes the covalent attachment of ubiquitin to other proteins. May be involved in apoptosis regulation. The chain is Ubiquitin-conjugating enzyme E2 Z (ube2z) from Danio rerio (Zebrafish).